Consider the following 417-residue polypeptide: uncharacterized protein (417 aa).

Transmembrane regions (helical) follow at residues 87–107 (LVVA…GYWI), 130–150 (IAGT…TPSV), 177–197 (FFIT…VYAA), and 202–222 (IIDT…LWPD). Low complexity predominate over residues 366-398 (APSAPAAAEHKATSSSNSSNSSPGSSNPTTAPT). The segment at 366–417 (APSAPAAAEHKATSSSNSSNSSPGSSNPTTAPTDKFRTGSPKTQPEKISAFW) is disordered.

This sequence belongs to the YccS/YhfK family.

It is found in the cell membrane. This is an uncharacterized protein from Neisseria gonorrhoeae.